The chain runs to 337 residues: AP2/ERF and B3 domain-containing transcription factor At1g50680 (337 aa).

The segment at residues 27-84 (KYKGVVQQQNGHWGAQIYADHKRIWLGTFKSADEAATAYDSASIKLRSFDANSHRNFP) is a DNA-binding region (AP2/ERF). Residues 157 to 271 (FQKELTPSDV…VKTLEGQRKN (115 aa)) constitute a DNA-binding region (TF-B3).

This sequence belongs to the AP2/ERF transcription factor family. RAV subfamily.

The protein localises to the nucleus. Its function is as follows. Probably acts as a transcriptional activator. Binds to the GCC-box pathogenesis-related promoter element. May be involved in the regulation of gene expression by stress factors and by components of stress signal transduction pathways. The chain is AP2/ERF and B3 domain-containing transcription factor At1g50680 from Arabidopsis thaliana (Mouse-ear cress).